A 101-amino-acid polypeptide reads, in one-letter code: Small ribosomal subunit protein eS24 (101 aa).

It belongs to the eukaryotic ribosomal protein eS24 family.

This chain is Small ribosomal subunit protein eS24, found in Methanosarcina barkeri (strain Fusaro / DSM 804).